The primary structure comprises 451 residues: Tubulin alpha-2 chain (451 aa).

Gln11 lines the GTP pocket. Lys40 is modified (N6-acetyllysine). 6 residues coordinate GTP: Glu71, Gly144, Thr145, Thr179, Asn206, and Asn228. Glu71 provides a ligand contact to Mg(2+). Glu254 is an active-site residue.

Belongs to the tubulin family. Dimer of alpha and beta chains. A typical microtubule is a hollow water-filled tube with an outer diameter of 25 nm and an inner diameter of 15 nM. Alpha-beta heterodimers associate head-to-tail to form protofilaments running lengthwise along the microtubule wall with the beta-tubulin subunit facing the microtubule plus end conferring a structural polarity. Microtubules usually have 13 protofilaments but different protofilament numbers can be found in some organisms and specialized cells. Mg(2+) is required as a cofactor. Post-translationally, undergoes a tyrosination/detyrosination cycle, the cyclic removal and re-addition of a C-terminal tyrosine residue by the enzymes tubulin tyrosine carboxypeptidase (TTCP) and tubulin tyrosine ligase (TTL), respectively.

The protein resides in the cytoplasm. It is found in the cytoskeleton. It catalyses the reaction GTP + H2O = GDP + phosphate + H(+). Functionally, tubulin is the major constituent of microtubules, a cylinder consisting of laterally associated linear protofilaments composed of alpha- and beta-tubulin heterodimers. Microtubules grow by the addition of GTP-tubulin dimers to the microtubule end, where a stabilizing cap forms. Below the cap, tubulin dimers are in GDP-bound state, owing to GTPase activity of alpha-tubulin. The chain is Tubulin alpha-2 chain (TUBA2) from Chlamydomonas reinhardtii (Chlamydomonas smithii).